Here is a 206-residue protein sequence, read N- to C-terminus: MLKTIRKHGITLALFAAGSTGLTAAINQMTKTTIAEQASLQQKALFDQVLPAERYNNALAQSCYLVTAPELGKGEHRVYIAKQDDKPVAAVLEATAPDGYSGAIQLLVGADFNGTVLGTRVTEHHETPGLGDKIELRLSDWITHFAGKKISGADDAHWAVKKDGGNFDQFTGATITPRAVVNAVKRAGLYAQTLPEQLSQLPACGE.

A helical membrane pass occupies residues 9-29 (GITLALFAAGSTGLTAAINQM). Position 174 is an FMN phosphoryl threonine (T174).

Belongs to the RnfG family. The complex is composed of six subunits: RsxA, RsxB, RsxC, RsxD, RsxE and RsxG. FMN is required as a cofactor.

It localises to the cell inner membrane. In terms of biological role, part of a membrane-bound complex that couples electron transfer with translocation of ions across the membrane. Required to maintain the reduced state of SoxR. The polypeptide is Ion-translocating oxidoreductase complex subunit G (Escherichia coli O157:H7).